Reading from the N-terminus, the 424-residue chain is Histidine--tRNA ligase (424 aa).

The protein belongs to the class-II aminoacyl-tRNA synthetase family. Homodimer.

It is found in the cytoplasm. The catalysed reaction is tRNA(His) + L-histidine + ATP = L-histidyl-tRNA(His) + AMP + diphosphate + H(+). The sequence is that of Histidine--tRNA ligase from Bacillus licheniformis (strain ATCC 14580 / DSM 13 / JCM 2505 / CCUG 7422 / NBRC 12200 / NCIMB 9375 / NCTC 10341 / NRRL NRS-1264 / Gibson 46).